Reading from the N-terminus, the 145-residue chain is I-leader protein (145 aa).

It is found in the host cytoplasm. It localises to the host perinuclear region. In Human adenovirus C serotype 2 (HAdV-2), this protein is I-leader protein.